A 199-amino-acid polypeptide reads, in one-letter code: UPF0301 protein Ajs_3573 (199 aa).

Belongs to the UPF0301 (AlgH) family.

The sequence is that of UPF0301 protein Ajs_3573 from Acidovorax sp. (strain JS42).